The sequence spans 143 residues: Nucleoside diphosphate kinase (143 aa).

Lys-11, Phe-59, Arg-87, Thr-93, Arg-104, and Asn-114 together coordinate ATP. The active-site Pros-phosphohistidine intermediate is the His-117.

Belongs to the NDK family. Homotetramer. Mg(2+) is required as a cofactor.

Its subcellular location is the cytoplasm. The catalysed reaction is a 2'-deoxyribonucleoside 5'-diphosphate + ATP = a 2'-deoxyribonucleoside 5'-triphosphate + ADP. It catalyses the reaction a ribonucleoside 5'-diphosphate + ATP = a ribonucleoside 5'-triphosphate + ADP. Major role in the synthesis of nucleoside triphosphates other than ATP. The ATP gamma phosphate is transferred to the NDP beta phosphate via a ping-pong mechanism, using a phosphorylated active-site intermediate. This Shewanella sp. (strain ANA-3) protein is Nucleoside diphosphate kinase.